Here is a 173-residue protein sequence, read N- to C-terminus: Crossover junction endodeoxyribonuclease RuvC (173 aa).

Active-site residues include Asp8, Glu67, and Asp139. Asp8, Glu67, and Asp139 together coordinate Mg(2+).

The protein belongs to the RuvC family. Homodimer which binds Holliday junction (HJ) DNA. The HJ becomes 2-fold symmetrical on binding to RuvC with unstacked arms; it has a different conformation from HJ DNA in complex with RuvA. In the full resolvosome a probable DNA-RuvA(4)-RuvB(12)-RuvC(2) complex forms which resolves the HJ. The cofactor is Mg(2+).

The protein localises to the cytoplasm. It catalyses the reaction Endonucleolytic cleavage at a junction such as a reciprocal single-stranded crossover between two homologous DNA duplexes (Holliday junction).. In terms of biological role, the RuvA-RuvB-RuvC complex processes Holliday junction (HJ) DNA during genetic recombination and DNA repair. Endonuclease that resolves HJ intermediates. Cleaves cruciform DNA by making single-stranded nicks across the HJ at symmetrical positions within the homologous arms, yielding a 5'-phosphate and a 3'-hydroxyl group; requires a central core of homology in the junction. The consensus cleavage sequence is 5'-(A/T)TT(C/G)-3'. Cleavage occurs on the 3'-side of the TT dinucleotide at the point of strand exchange. HJ branch migration catalyzed by RuvA-RuvB allows RuvC to scan DNA until it finds its consensus sequence, where it cleaves and resolves the cruciform DNA. The sequence is that of Crossover junction endodeoxyribonuclease RuvC from Salmonella paratyphi C (strain RKS4594).